The chain runs to 354 residues: Putative ankyrin repeat protein L284 (354 aa).

3 ANK repeats span residues 201–230 (ILDD…LSND), 253–284 (SRYP…NPIV), and 286–314 (LHKA…DIDI).

The chain is Putative ankyrin repeat protein L284 from Acanthamoeba polyphaga (Amoeba).